Consider the following 430-residue polypeptide: Lipoyl synthase, chloroplastic (430 aa).

Positions 1–16 (MRSLATLHQSPASCSR) are enriched in polar residues. A chloroplast-targeting transit peptide spans 1-40 (MRSLATLHQSPASCSRSAPVAPCPARRANSSRRVARQGPR). 2 disordered regions span residues 1-55 (MRSL…SEDV) and 85-119 (HLRS…SLGA). Positions 91–119 (KSAAPVSPFAAPSPGSPSASSMLGPSLGA) are enriched in low complexity. 7 residues coordinate [4Fe-4S] cluster: cysteine 155, cysteine 160, cysteine 166, cysteine 183, cysteine 187, cysteine 190, and serine 397. The Radical SAM core domain maps to 166-386 (CWNGELATAT…KFGQEEIGFR (221 aa)).

This sequence belongs to the radical SAM superfamily. Lipoyl synthase family. It depends on [4Fe-4S] cluster as a cofactor.

The protein resides in the plastid. It localises to the chloroplast. It carries out the reaction [[Fe-S] cluster scaffold protein carrying a second [4Fe-4S](2+) cluster] + N(6)-octanoyl-L-lysyl-[protein] + 2 oxidized [2Fe-2S]-[ferredoxin] + 2 S-adenosyl-L-methionine + 4 H(+) = [[Fe-S] cluster scaffold protein] + N(6)-[(R)-dihydrolipoyl]-L-lysyl-[protein] + 4 Fe(3+) + 2 hydrogen sulfide + 2 5'-deoxyadenosine + 2 L-methionine + 2 reduced [2Fe-2S]-[ferredoxin]. Its pathway is protein modification; protein lipoylation via endogenous pathway; protein N(6)-(lipoyl)lysine from octanoyl-[acyl-carrier-protein]: step 2/2. Functionally, catalyzes the radical-mediated insertion of two sulfur atoms into the C-6 and C-8 positions of the octanoyl moiety bound to the lipoyl domains of lipoate-dependent enzymes, thereby converting the octanoylated domains into lipoylated derivatives. This is Lipoyl synthase, chloroplastic from Chlamydomonas reinhardtii (Chlamydomonas smithii).